A 330-amino-acid polypeptide reads, in one-letter code: Olfactory receptor 5P73 (330 aa).

At 1 to 28 the chain is on the extracellular side; sequence MAFLEDGNHTTVTEFFLLGLTDDPVLRD. Asn8 is a glycosylation site (N-linked (GlcNAc...) asparagine). A helical transmembrane segment spans residues 29–49; sequence ILFIIILCIYLVTVSGNLSTI. The Cytoplasmic segment spans residues 50–57; that stretch reads LLIRVSSQ. Residues 58-78 form a helical membrane-spanning segment; that stretch reads LHHPMYFILSHLASVDIGISS. The Extracellular segment spans residues 79–102; that stretch reads SVTPNMLATFLVKQNTISYIGCSI. A disulfide bridge links Cys100 with Cys192. Residues 103 to 123 traverse the membrane as a helical segment; the sequence is QFTSAAFFGTVECFLLATMAY. The Cytoplasmic portion of the chain corresponds to 124 to 136; sequence DRFVAICNPLLYS. A helical membrane pass occupies residues 137–157; sequence TKMSTEACIQLVVGSYIQGFL. Residues 158 to 199 are Extracellular-facing; sequence NASFFTLSFFSLFFCGPNRINDFYCDFAPLLELSCSDVTVAV. A helical membrane pass occupies residues 200 to 220; the sequence is VITSISAGFITLTTVFVIAIS. The Cytoplasmic segment spans residues 221 to 240; sequence YSCIFITIMKMHSTESRCKA. The chain crosses the membrane as a helical span at residues 241–261; that stretch reads FSTCTSHLTAVILFYGTAIFI. Residues 262–274 lie on the Extracellular side of the membrane; the sequence is YVMPKSSYSTDQN. Residues 275 to 295 traverse the membrane as a helical segment; the sequence is KVLSIFYTVVIPMLNPLIYSL. Residues 296–330 are Cytoplasmic-facing; it reads RNNEIKEALKRHLGKKVFSYGNLFCKTHYNHNYPV.

Belongs to the G-protein coupled receptor 1 family.

It localises to the cell membrane. Potential odorant receptor. This Mus musculus (Mouse) protein is Olfactory receptor 5P73.